A 469-amino-acid polypeptide reads, in one-letter code: Siroheme synthase (469 aa).

Residues 1–211 (MSTQLQTWDF…GRTDKARAML (211 aa)) form a precorrin-2 dehydrogenase /sirohydrochlorin ferrochelatase region. Residues 29–30 (EQ) and 50–51 (DP) contribute to the NAD(+) site. Ser-136 is modified (phosphoserine). The interval 227–469 (GEVYLVGAGP…TLRDRLRWMD (243 aa)) is uroporphyrinogen-III C-methyltransferase. An S-adenosyl-L-methionine-binding site is contributed by Pro-236. Asp-259 serves as the catalytic Proton acceptor. The Proton donor role is filled by Lys-281. Residues 312 to 314 (GGD), Ile-317, 342 to 343 (TA), Met-394, and Gly-423 each bind S-adenosyl-L-methionine.

The protein in the N-terminal section; belongs to the precorrin-2 dehydrogenase / sirohydrochlorin ferrochelatase family. In the C-terminal section; belongs to the precorrin methyltransferase family.

The enzyme catalyses uroporphyrinogen III + 2 S-adenosyl-L-methionine = precorrin-2 + 2 S-adenosyl-L-homocysteine + H(+). The catalysed reaction is precorrin-2 + NAD(+) = sirohydrochlorin + NADH + 2 H(+). It carries out the reaction siroheme + 2 H(+) = sirohydrochlorin + Fe(2+). It functions in the pathway cofactor biosynthesis; adenosylcobalamin biosynthesis; precorrin-2 from uroporphyrinogen III: step 1/1. The protein operates within cofactor biosynthesis; adenosylcobalamin biosynthesis; sirohydrochlorin from precorrin-2: step 1/1. Its pathway is porphyrin-containing compound metabolism; siroheme biosynthesis; precorrin-2 from uroporphyrinogen III: step 1/1. It participates in porphyrin-containing compound metabolism; siroheme biosynthesis; siroheme from sirohydrochlorin: step 1/1. It functions in the pathway porphyrin-containing compound metabolism; siroheme biosynthesis; sirohydrochlorin from precorrin-2: step 1/1. In terms of biological role, multifunctional enzyme that catalyzes the SAM-dependent methylations of uroporphyrinogen III at position C-2 and C-7 to form precorrin-2 via precorrin-1. Then it catalyzes the NAD-dependent ring dehydrogenation of precorrin-2 to yield sirohydrochlorin. Finally, it catalyzes the ferrochelation of sirohydrochlorin to yield siroheme. The protein is Siroheme synthase of Hahella chejuensis (strain KCTC 2396).